A 103-amino-acid polypeptide reads, in one-letter code: Probable protease inhibitor Egf0.4a (103 aa).

Positions Met-1–Thr-22 are cleaved as a signal peptide. Residues Cys-35–Cys-87 form the TIL domain.

Belongs to the polydnaviridae EGF-like motif protein family.

The protein is Probable protease inhibitor Egf0.4a (O4) of Microplitis demolitor (Parasitoid wasp).